A 439-amino-acid chain; its full sequence is Taxadien-5-alpha-ol O-acetyltransferase (439 aa).

Residues H164 and D373 each act as proton acceptor in the active site.

The protein belongs to the plant acyltransferase family.

It catalyses the reaction taxa-4(20),11-dien-5alpha-ol + acetyl-CoA = taxa-4(20),11-dien-5alpha-yl acetate + CoA. The protein operates within alkaloid biosynthesis; taxol biosynthesis; 10-deacetyl-2-debenzoylbaccatin III from taxa-4(20),11-dien-5alpha-ol: step 1/3. The sequence is that of Taxadien-5-alpha-ol O-acetyltransferase (TAT) from Taxus cuspidata (Japanese yew).